The sequence spans 444 residues: Homocysteine/cysteine synthase (444 aa).

At Lys208 the chain carries N6-(pyridoxal phosphate)lysine.

This sequence belongs to the trans-sulfuration enzymes family. As to quaternary structure, homotetramer. Pyridoxal 5'-phosphate is required as a cofactor.

Its subcellular location is the cytoplasm. The catalysed reaction is O-acetyl-L-homoserine + methanethiol = L-methionine + acetate + H(+). The enzyme catalyses O-acetyl-L-homoserine + hydrogen sulfide = L-homocysteine + acetate. It carries out the reaction O-acetyl-L-serine + hydrogen sulfide = L-cysteine + acetate. It functions in the pathway amino-acid biosynthesis; L-methionine biosynthesis via de novo pathway; L-homocysteine from O-acetyl-L-homoserine. It participates in amino-acid biosynthesis; L-cysteine biosynthesis; L-cysteine from L-serine: step 2/2. Catalyzes the conversion of O-acetyl-L-homoserine (OAH) into homocysteine in the methionine biosynthesis pathway. Also catalyzes the conversion of O-acetylserine (OAS) into cysteine, the last step in the cysteine biosynthesis pathway. This Kluyveromyces lactis (strain ATCC 8585 / CBS 2359 / DSM 70799 / NBRC 1267 / NRRL Y-1140 / WM37) (Yeast) protein is Homocysteine/cysteine synthase (MET17).